A 454-amino-acid polypeptide reads, in one-letter code: Cobyrinate a,c-diamide synthase (454 aa).

One can recognise a GATase cobBQ-type domain in the interval 244–440 (RLGIAKDKAF…LHVHFYQNPK (197 aa)). C326 (nucleophile) is an active-site residue.

The protein belongs to the CobB/CbiA family. Requires Mg(2+) as cofactor.

It catalyses the reaction cob(II)yrinate + 2 L-glutamine + 2 ATP + 2 H2O = cob(II)yrinate a,c diamide + 2 L-glutamate + 2 ADP + 2 phosphate + 2 H(+). It participates in cofactor biosynthesis; adenosylcobalamin biosynthesis; cob(II)yrinate a,c-diamide from sirohydrochlorin (anaerobic route): step 10/10. Catalyzes the ATP-dependent amidation of the two carboxylate groups at positions a and c of cobyrinate, using either L-glutamine or ammonia as the nitrogen source. The polypeptide is Cobyrinate a,c-diamide synthase (Limosilactobacillus reuteri subsp. reuteri (strain JCM 1112) (Lactobacillus reuteri)).